A 115-amino-acid chain; its full sequence is Cytochrome c oxidase subunit 3 (115 aa).

2 consecutive transmembrane segments (helical) span residues 32-52 (CLQG…LQGL) and 70-90 (FFLA…FLMI).

This sequence belongs to the cytochrome c oxidase subunit 3 family. In terms of assembly, component of the cytochrome c oxidase (complex IV, CIV), a multisubunit enzyme composed of a catalytic core of 3 subunits and several supernumerary subunits. The complex exists as a monomer or a dimer and forms supercomplexes (SCs) in the inner mitochondrial membrane with ubiquinol-cytochrome c oxidoreductase (cytochrome b-c1 complex, complex III, CIII).

Its subcellular location is the mitochondrion inner membrane. It catalyses the reaction 4 Fe(II)-[cytochrome c] + O2 + 8 H(+)(in) = 4 Fe(III)-[cytochrome c] + 2 H2O + 4 H(+)(out). In terms of biological role, component of the cytochrome c oxidase, the last enzyme in the mitochondrial electron transport chain which drives oxidative phosphorylation. The respiratory chain contains 3 multisubunit complexes succinate dehydrogenase (complex II, CII), ubiquinol-cytochrome c oxidoreductase (cytochrome b-c1 complex, complex III, CIII) and cytochrome c oxidase (complex IV, CIV), that cooperate to transfer electrons derived from NADH and succinate to molecular oxygen, creating an electrochemical gradient over the inner membrane that drives transmembrane transport and the ATP synthase. Cytochrome c oxidase is the component of the respiratory chain that catalyzes the reduction of oxygen to water. Electrons originating from reduced cytochrome c in the intermembrane space (IMS) are transferred via the dinuclear copper A center (CU(A)) of subunit 2 and heme A of subunit 1 to the active site in subunit 1, a binuclear center (BNC) formed by heme A3 and copper B (CU(B)). The BNC reduces molecular oxygen to 2 water molecules using 4 electrons from cytochrome c in the IMS and 4 protons from the mitochondrial matrix. In Artemia salina (Brine shrimp), this protein is Cytochrome c oxidase subunit 3 (COIII).